A 364-amino-acid polypeptide reads, in one-letter code: Deoxyribonuclease-2-alpha (364 aa).

The N-terminal stretch at 1 to 21 (MATLSPLLLAALLWVPVGTLT) is a signal peptide. Cys22 and Cys161 are oxidised to a cystine. Asn72, Asn88, Asn171, Asn214, Asn268, and Asn292 each carry an N-linked (GlcNAc...) asparagine glycan. 2 disulfides stabilise this stretch: Cys269–Cys349 and Cys310–Cys329. The active site involves His297.

It belongs to the DNase II family.

Its subcellular location is the lysosome. The catalysed reaction is Endonucleolytic cleavage to nucleoside 3'-phosphates and 3'-phosphooligonucleotide end-products.. In terms of biological role, hydrolyzes DNA under acidic conditions with a preference for double-stranded DNA. Plays a major role in the clearance of nucleic acids generated through apoptosis, hence preventing autoinflammation. Necessary for proper fetal development and for definitive erythropoiesis in fetal liver and bone marrow, where it degrades nuclear DNA expelled from erythroid precursor cells. In Sus scrofa (Pig), this protein is Deoxyribonuclease-2-alpha (DNASE2).